The following is a 421-amino-acid chain: UDP-N-acetylglucosamine 1-carboxyvinyltransferase (421 aa).

Phosphoenolpyruvate is bound at residue 22–23 (KN). Arg93 lines the UDP-N-acetyl-alpha-D-glucosamine pocket. Catalysis depends on Cys117, which acts as the Proton donor. A 2-(S-cysteinyl)pyruvic acid O-phosphothioketal modification is found at Cys117. UDP-N-acetyl-alpha-D-glucosamine contacts are provided by residues 122 to 126 (RPVDL), Asp308, and Ile330.

It belongs to the EPSP synthase family. MurA subfamily.

It is found in the cytoplasm. It carries out the reaction phosphoenolpyruvate + UDP-N-acetyl-alpha-D-glucosamine = UDP-N-acetyl-3-O-(1-carboxyvinyl)-alpha-D-glucosamine + phosphate. The protein operates within cell wall biogenesis; peptidoglycan biosynthesis. In terms of biological role, cell wall formation. Adds enolpyruvyl to UDP-N-acetylglucosamine. The chain is UDP-N-acetylglucosamine 1-carboxyvinyltransferase from Pseudomonas fluorescens (strain SBW25).